Here is a 428-residue protein sequence, read N- to C-terminus: Serine--tRNA ligase (428 aa).

Residue 231–233 coordinates L-serine; the sequence is TAE. 262-264 serves as a coordination point for ATP; sequence RSE. Residue Glu285 coordinates L-serine. 349 to 352 contacts ATP; it reads EISS. Residue Ser385 coordinates L-serine.

This sequence belongs to the class-II aminoacyl-tRNA synthetase family. Type-1 seryl-tRNA synthetase subfamily. As to quaternary structure, homodimer. The tRNA molecule binds across the dimer.

The protein localises to the cytoplasm. It catalyses the reaction tRNA(Ser) + L-serine + ATP = L-seryl-tRNA(Ser) + AMP + diphosphate + H(+). It carries out the reaction tRNA(Sec) + L-serine + ATP = L-seryl-tRNA(Sec) + AMP + diphosphate + H(+). It participates in aminoacyl-tRNA biosynthesis; selenocysteinyl-tRNA(Sec) biosynthesis; L-seryl-tRNA(Sec) from L-serine and tRNA(Sec): step 1/1. Catalyzes the attachment of serine to tRNA(Ser). Is also able to aminoacylate tRNA(Sec) with serine, to form the misacylated tRNA L-seryl-tRNA(Sec), which will be further converted into selenocysteinyl-tRNA(Sec). The chain is Serine--tRNA ligase from Staphylococcus aureus (strain MW2).